The chain runs to 252 residues: Flap endonuclease Xni (252 aa).

Aspartate 103 contributes to the Mg(2+) binding site. One can recognise a 5'-3' exonuclease domain in the interval 159–248 (VLPEQLPDYW…LKGNLQQLRL (90 aa)). Positions 170, 171, 179, 181, and 184 each coordinate K(+). The interaction with DNA stretch occupies residues 183 to 188 (GIGPKT).

This sequence belongs to the Xni family. It depends on Mg(2+) as a cofactor. K(+) serves as cofactor.

Has flap endonuclease activity. During DNA replication, flap endonucleases cleave the 5'-overhanging flap structure that is generated by displacement synthesis when DNA polymerase encounters the 5'-end of a downstream Okazaki fragment. The polypeptide is Flap endonuclease Xni (Photorhabdus laumondii subsp. laumondii (strain DSM 15139 / CIP 105565 / TT01) (Photorhabdus luminescens subsp. laumondii)).